The primary structure comprises 570 residues: Proline--tRNA ligase (570 aa).

This sequence belongs to the class-II aminoacyl-tRNA synthetase family. ProS type 1 subfamily. As to quaternary structure, homodimer.

It is found in the cytoplasm. It catalyses the reaction tRNA(Pro) + L-proline + ATP = L-prolyl-tRNA(Pro) + AMP + diphosphate. In terms of biological role, catalyzes the attachment of proline to tRNA(Pro) in a two-step reaction: proline is first activated by ATP to form Pro-AMP and then transferred to the acceptor end of tRNA(Pro). As ProRS can inadvertently accommodate and process non-cognate amino acids such as alanine and cysteine, to avoid such errors it has two additional distinct editing activities against alanine. One activity is designated as 'pretransfer' editing and involves the tRNA(Pro)-independent hydrolysis of activated Ala-AMP. The other activity is designated 'posttransfer' editing and involves deacylation of mischarged Ala-tRNA(Pro). The misacylated Cys-tRNA(Pro) is not edited by ProRS. This Shewanella pealeana (strain ATCC 700345 / ANG-SQ1) protein is Proline--tRNA ligase.